A 439-amino-acid chain; its full sequence is Protein translocase subunit SecY (439 aa).

10 helical membrane-spanning segments follow: residues 19–39 (ILFTIFILFVFRLGAHITAPG), 68–88 (YSLFAMGVSPYITASIIVQLL), 116–136 (YITLVLAMAQSIGITAGFQAM), 151–171 (LMIGVLLTTGSMVVTWMGEQI), 176–196 (FGSGVSVIIFAGIVSGIPSAI), 216–236 (WIFVIGLILSAIVIIYVTTFV), 269–289 (VIPVIFAGSITTAPATILQFL), 312–332 (WTGMLFYALLIVLFTFFYSFV), 373–393 (VGSLFLGLISIIPIAAQNVWG), and 396–416 (KIVALGGTSLLILIQVAIQAV).

Belongs to the SecY/SEC61-alpha family. As to quaternary structure, component of the Sec protein translocase complex. Heterotrimer consisting of SecY, SecE and SecG subunits. The heterotrimers can form oligomers, although 1 heterotrimer is thought to be able to translocate proteins. Interacts with the ribosome. Interacts with SecDF, and other proteins may be involved. Interacts with SecA.

Its subcellular location is the cell membrane. In terms of biological role, the central subunit of the protein translocation channel SecYEG. Consists of two halves formed by TMs 1-5 and 6-10. These two domains form a lateral gate at the front which open onto the bilayer between TMs 2 and 7, and are clamped together by SecE at the back. The channel is closed by both a pore ring composed of hydrophobic SecY resides and a short helix (helix 2A) on the extracellular side of the membrane which forms a plug. The plug probably moves laterally to allow the channel to open. The ring and the pore may move independently. This chain is Protein translocase subunit SecY, found in Lactococcus lactis subsp. cremoris (Streptococcus cremoris).